A 216-amino-acid polypeptide reads, in one-letter code: Adenylate kinase (216 aa).

10–15 (GAGKGT) lines the ATP pocket. Positions 30 to 59 (STGDMLRAAVSAQTEVGKRAKAVMDAGKLV) are NMP. Residues threonine 31, arginine 36, 57-59 (KLV), 85-88 (GFPR), and glutamine 92 each bind AMP. The LID stretch occupies residues 126 to 163 (GRYTCANCGTGYHDENLKPKVEGVCDKCGSTHFKRRPD). ATP is bound at residue arginine 127. 4 residues coordinate Zn(2+): cysteine 130, cysteine 133, cysteine 150, and cysteine 153. The AMP site is built by arginine 160 and arginine 172. Alanine 200 is a binding site for ATP.

This sequence belongs to the adenylate kinase family. Monomer.

The protein localises to the cytoplasm. It catalyses the reaction AMP + ATP = 2 ADP. It participates in purine metabolism; AMP biosynthesis via salvage pathway; AMP from ADP: step 1/1. Catalyzes the reversible transfer of the terminal phosphate group between ATP and AMP. Plays an important role in cellular energy homeostasis and in adenine nucleotide metabolism. In Allorhizobium ampelinum (strain ATCC BAA-846 / DSM 112012 / S4) (Agrobacterium vitis (strain S4)), this protein is Adenylate kinase.